We begin with the raw amino-acid sequence, 349 residues long: Probable G-protein coupled receptor 21 (349 aa).

The Extracellular segment spans residues 1–32 (MNSTLDGNQSSHPFCLLAFGYLETVNFCLLEV). N-linked (GlcNAc...) asparagine glycosylation is found at Asn2 and Asn8. The chain crosses the membrane as a helical span at residues 33–53 (LIIVFLTVLIISGNIIVIFVF). The Cytoplasmic portion of the chain corresponds to 54–75 (HCAPLLNHHTTSYFIQTMAYAD). A helical membrane pass occupies residues 76-96 (LFVGVSCVVPSLSLLHHPLPV). Residues 97–104 (EESLTCQI) are Extracellular-facing. Residues 105 to 125 (FGFVVSVLKSVSMASLACISI) traverse the membrane as a helical segment. Residues 126–147 (DRYIAITKPLTYNTLVTPWRLR) are Cytoplasmic-facing. The chain crosses the membrane as a helical span at residues 148 to 168 (LCIFLIWLYSTLVFLPSFFHW). At 169–191 (GKPGYHGDVFQWCAESWHTDSYF) the chain is on the extracellular side. Residues 192-212 (TLFIVMMLYAPAALIVCFTYF) traverse the membrane as a helical segment. Residues 213–252 (NIFRICQQHTKDISERQARFSSQSGETGEVQACPDKRYAM) are Cytoplasmic-facing. The chain crosses the membrane as a helical span at residues 253–273 (VLFRITSVFYILWLPYIIYFL). Residues 274 to 283 (LESSTGHSNR) lie on the Extracellular side of the membrane. The helical transmembrane segment at 284–304 (FASFLTTWLAISNSFCNCVIY) threads the bilayer. Residues 305–349 (SLSNSVFQRGLKRLSGAMCTSCASQTTANDPYTVRSKGPLNGCHI) are Cytoplasmic-facing.

It belongs to the G-protein coupled receptor 1 family. As to expression, not detected in the brain regions thalamus, putamen, caudate, frontal cortex, pons, hypothalamus, hippocampus.

Its subcellular location is the cell membrane. In terms of biological role, orphan receptor. This chain is Probable G-protein coupled receptor 21 (GPR21), found in Homo sapiens (Human).